The primary structure comprises 399 residues: Rho GTPase-activating protein gacC (399 aa).

The span at 1–13 (MESKDQNVYRKGS) shows a compositional bias: basic and acidic residues. The disordered stretch occupies residues 1–80 (MESKDQNVYR…SSSTSTTPVK (80 aa)). Over residues 14–31 (DNFSKGSNTFFGNLKSIS) the composition is skewed to polar residues. The span at 61 to 79 (SVDSSSSNPSSSSTSTTPV) shows a compositional bias: low complexity. One can recognise a Rho-GAP domain in the interval 186-375 (VELEESFKTA…NLISFFQQIF (190 aa)).

The protein resides in the cytoplasm. Rho GTPase-activating protein involved in the signal transduction pathway. The protein is Rho GTPase-activating protein gacC (gacC) of Dictyostelium discoideum (Social amoeba).